The primary structure comprises 373 residues: Cathecol O-methyltransferase 1 (373 aa).

S-adenosyl-L-homocysteine contacts are provided by G209, D232, D252, M253, M265, and K266. An S-adenosyl-L-methionine-binding site is contributed by D232. The active-site Proton acceptor is the H279.

The protein belongs to the class I-like SAM-binding methyltransferase superfamily. Cation-independent O-methyltransferase family. COMT subfamily.

It catalyses the reaction catechol + S-adenosyl-L-methionine = guaiacol + S-adenosyl-L-homocysteine + H(+). Its function is as follows. O-methyltransferase that catalyzes the conversion of catechol to guaiacol. Involved in the production of guaiacol in fruits. In Solanum lycopersicum (Tomato), this protein is Cathecol O-methyltransferase 1.